Here is a 316-residue protein sequence, read N- to C-terminus: MSIHPQLNKNGELQHLLTTEGLPVTILRHILDTAESFTGVTERDVKKIPLLRGKSVFNLFFEPSTRTRTTFEIAAKRLSADVINLSMAVSSQTKGETLLDTVNNLSAMHADMFVVRHNQSGAAHLIARHVGPEIHVINAGDGWHAHPTQALLDMFTIRRYKQDFHTLRVAIIGDILHSRVARSQIHALTTLGVPEIRVIAPKTLLPARVERLGVHVYHNMTQGLKDVDVLMMLRLQHERMESAHLPSTEEYFKYYGLTPGKLLLARSDAIVMHPGPMNRGVEIDSEVADGSQSVILPQVGFGIAVRMAVMSILAGN.

Carbamoyl phosphate is bound by residues arginine 66 and threonine 67. Lysine 94 lines the L-aspartate pocket. Positions 116, 146, and 149 each coordinate carbamoyl phosphate. The L-aspartate site is built by arginine 179 and arginine 234. Carbamoyl phosphate contacts are provided by glycine 275 and proline 276.

It belongs to the aspartate/ornithine carbamoyltransferase superfamily. ATCase family. In terms of assembly, heterododecamer (2C3:3R2) of six catalytic PyrB chains organized as two trimers (C3), and six regulatory PyrI chains organized as three dimers (R2).

It carries out the reaction carbamoyl phosphate + L-aspartate = N-carbamoyl-L-aspartate + phosphate + H(+). The protein operates within pyrimidine metabolism; UMP biosynthesis via de novo pathway; (S)-dihydroorotate from bicarbonate: step 2/3. In terms of biological role, catalyzes the condensation of carbamoyl phosphate and aspartate to form carbamoyl aspartate and inorganic phosphate, the committed step in the de novo pyrimidine nucleotide biosynthesis pathway. In Nitrosomonas eutropha (strain DSM 101675 / C91 / Nm57), this protein is Aspartate carbamoyltransferase catalytic subunit.